The chain runs to 695 residues: Polyribonucleotide nucleotidyltransferase (695 aa).

Asp488 and Asp494 together coordinate Mg(2+). Residues Pro554 to Val613 enclose the KH domain. In terms of domain architecture, S1 motif spans Gly623–Lys690.

It belongs to the polyribonucleotide nucleotidyltransferase family. In terms of assembly, component of the RNA degradosome, which is a multiprotein complex involved in RNA processing and mRNA degradation. Mg(2+) serves as cofactor.

The protein resides in the cytoplasm. It catalyses the reaction RNA(n+1) + phosphate = RNA(n) + a ribonucleoside 5'-diphosphate. Its function is as follows. Involved in mRNA degradation. Catalyzes the phosphorolysis of single-stranded polyribonucleotides processively in the 3'- to 5'-direction. The chain is Polyribonucleotide nucleotidyltransferase from Ruthia magnifica subsp. Calyptogena magnifica.